The sequence spans 140 residues: Nucleoside diphosphate kinase (140 aa).

ATP is bound by residues Lys-11, Phe-59, Arg-87, Thr-93, Arg-104, and Asn-114. His-117 acts as the Pros-phosphohistidine intermediate in catalysis.

The protein belongs to the NDK family. Homotetramer. Mg(2+) is required as a cofactor.

It localises to the cytoplasm. It carries out the reaction a 2'-deoxyribonucleoside 5'-diphosphate + ATP = a 2'-deoxyribonucleoside 5'-triphosphate + ADP. The enzyme catalyses a ribonucleoside 5'-diphosphate + ATP = a ribonucleoside 5'-triphosphate + ADP. Functionally, major role in the synthesis of nucleoside triphosphates other than ATP. The ATP gamma phosphate is transferred to the NDP beta phosphate via a ping-pong mechanism, using a phosphorylated active-site intermediate. The polypeptide is Nucleoside diphosphate kinase (Methylorubrum extorquens (strain CM4 / NCIMB 13688) (Methylobacterium extorquens)).